A 232-amino-acid chain; its full sequence is Cytidylate kinase (232 aa).

11–19 (GPAGAGKST) contributes to the ATP binding site.

Belongs to the cytidylate kinase family. Type 1 subfamily.

Its subcellular location is the cytoplasm. The catalysed reaction is CMP + ATP = CDP + ADP. The enzyme catalyses dCMP + ATP = dCDP + ADP. The polypeptide is Cytidylate kinase (Roseiflexus castenholzii (strain DSM 13941 / HLO8)).